Here is a 1819-residue protein sequence, read N- to C-terminus: Gamma-tubulin complex component 6 (1819 aa).

Disordered stretches follow at residues 810–889, 929–951, and 1000–1023; these read SEAH…GARP, LPPS…PQEY, and RETL…QPTE. 9 repeat units span residues 1027–1053, 1054–1080, 1081–1107, 1108–1134, 1135–1161, 1162–1188, 1189–1215, 1216–1242, and 1243–1269. Residues 1027-1269 are 9 X 27 AA tandem repeats; the sequence is GQVSGGGLPT…VSTRPRWNTH (243 aa). Positions 1271–1412 are disordered; that stretch reads PIPPPHMVLG…EAEASAAEAQ (142 aa). Residues 1297–1314 show a composition bias toward polar residues; that stretch reads PPGHTSQSALSLGAQSTV. Over residues 1321 to 1335 the composition is skewed to low complexity; it reads LPVEVGPSLSSPSSG. Over residues 1384–1398 the composition is skewed to polar residues; that stretch reads WPLNSQEDTAAQSSP.

The protein belongs to the TUBGCP family. Component of the gamma-tubulin ring complex (gTuRC) consisting of TUBGCP2, TUBGCP3, TUBGCP4, TUBGCP5 and TUBGCP6 and gamma-tubulin TUBG1 or TUBG2. TUBGCP2, TUBGCP3, TUBGCP4, TUBGCP5 and TUBGCP6 assemble in a 5:5:2:1:1 stoichiometry; each is associated with a gamma-tubulin, thereby arranging 14 gamma-tubulins in a helical manner. Gamma-tubulin at the first position is blocked by TUBGCP3 at the last position, allowing 13 protafilaments to grow into a microtubule. The gTuRC (via TUBGCP3 and TUBGCP6) interacts with ACTB and MZT1; the interactions form a luminal bridge that stabilizes the initial structure during complex assembly. The gTuRC (via TUBGCP2) interacts with MZT2A/MZT2B and CDK5RAP2 (via CM1 motif); the interactions play a role in gTuRC activation.

Its subcellular location is the cytoplasm. It is found in the cytoskeleton. It localises to the microtubule organizing center. The protein localises to the centrosome. Functionally, component of the gamma-tubulin ring complex (gTuRC) which mediates microtubule nucleation. The gTuRC regulates the minus-end nucleation of alpha-beta tubulin heterodimers that grow into microtubule protafilaments, a critical step in centrosome duplication and spindle formation. The sequence is that of Gamma-tubulin complex component 6 (TUBGCP6) from Homo sapiens (Human).